The chain runs to 349 residues: Ferredoxin--NADP reductase 1 (349 aa).

Glu-36, Lys-44, Tyr-48, Val-88, Leu-123, Asp-290, and Ser-331 together coordinate FAD.

It belongs to the ferredoxin--NADP reductase type 2 family. In terms of assembly, homodimer. The cofactor is FAD.

It catalyses the reaction 2 reduced [2Fe-2S]-[ferredoxin] + NADP(+) + H(+) = 2 oxidized [2Fe-2S]-[ferredoxin] + NADPH. The protein is Ferredoxin--NADP reductase 1 of Bacillus cereus (strain ATCC 10987 / NRS 248).